The sequence spans 232 residues: Glycerol-3-phosphate acyltransferase (232 aa).

Helical transmembrane passes span 4-24, 56-76, 90-110, 124-144, 147-167, and 191-211; these read FLAI…IIAG, AVTL…VAFF, IALN…TVFA, MLIG…ILAI, TRYV…IIAI, and SLDY…IYTH.

It belongs to the PlsY family. Probably interacts with PlsX.

Its subcellular location is the cell inner membrane. The enzyme catalyses an acyl phosphate + sn-glycerol 3-phosphate = a 1-acyl-sn-glycero-3-phosphate + phosphate. It functions in the pathway lipid metabolism; phospholipid metabolism. In terms of biological role, catalyzes the transfer of an acyl group from acyl-phosphate (acyl-PO(4)) to glycerol-3-phosphate (G3P) to form lysophosphatidic acid (LPA). This enzyme utilizes acyl-phosphate as fatty acyl donor, but not acyl-CoA or acyl-ACP. This chain is Glycerol-3-phosphate acyltransferase, found in Chlorobaculum parvum (strain DSM 263 / NCIMB 8327) (Chlorobium vibrioforme subsp. thiosulfatophilum).